A 298-amino-acid chain; its full sequence is tRNA uridine(34) hydroxylase (298 aa).

The 95-residue stretch at 123–217 folds into the Rhodanese domain; that stretch reads QNPDVTLVDT…YLEEIPVAES (95 aa). Catalysis depends on cysteine 177, which acts as the Cysteine persulfide intermediate.

It belongs to the TrhO family.

It carries out the reaction uridine(34) in tRNA + AH2 + O2 = 5-hydroxyuridine(34) in tRNA + A + H2O. Catalyzes oxygen-dependent 5-hydroxyuridine (ho5U) modification at position 34 in tRNAs. This Picosynechococcus sp. (strain ATCC 27264 / PCC 7002 / PR-6) (Agmenellum quadruplicatum) protein is tRNA uridine(34) hydroxylase.